Reading from the N-terminus, the 489-residue chain is Rhamnulokinase (489 aa).

13–17 (ASSGR) contributes to the ATP binding site. A disulfide bond links C68 and C222. Residues G83 and 236–238 (HDT) contribute to the substrate site. Catalysis depends on D237, which acts as the Proton acceptor. ATP is bound at residue T259. Residue N296 participates in substrate binding. Residue Q304 coordinates ATP. C353 and C370 are oxidised to a cystine. G402 is a binding site for ATP. A disulfide bond links C413 and C417.

Belongs to the rhamnulokinase family. Monomer. Mg(2+) serves as cofactor.

The catalysed reaction is L-rhamnulose + ATP = L-rhamnulose 1-phosphate + ADP + H(+). The protein operates within carbohydrate degradation; L-rhamnose degradation; glycerone phosphate from L-rhamnose: step 2/3. Involved in the catabolism of L-rhamnose (6-deoxy-L-mannose). Catalyzes the transfer of the gamma-phosphate group from ATP to the 1-hydroxyl group of L-rhamnulose to yield L-rhamnulose 1-phosphate. The chain is Rhamnulokinase from Escherichia coli O9:H4 (strain HS).